The primary structure comprises 487 residues: 26S proteasome non-ATPase regulatory subunit 3 homolog B (487 aa).

Residues 1 to 21 (MTQDVEMKDNQTPTQSVVSAP) are disordered. A compositionally biased stretch (polar residues) spans 10–21 (NQTPTQSVVSAP). Residues 239 to 420 (CRYLFYLGKI…GCMVSKETGD (182 aa)) enclose the PCI domain. Positions 452-487 (PPNTHREKESEEKRREMKQQEEELAKYMAEEDDDDF) are disordered. Residues 455 to 480 (THREKESEEKRREMKQQEEELAKYMA) show a composition bias toward basic and acidic residues.

This sequence belongs to the proteasome subunit S3 family. In terms of assembly, component of the 19S regulatory particle (RP/PA700) lid subcomplex of the 26S proteasome. The 26S proteasome is composed of a core protease (CP), known as the 20S proteasome, capped at one or both ends by the 19S regulatory particle (RP/PA700). The RP/PA700 complex is composed of at least 17 different subunits in two subcomplexes, the base and the lid, which form the portions proximal and distal to the 20S proteolytic core, respectively. Interacts with UCH1 and UCH2. Preferentially expressed in flowers.

Its function is as follows. Acts as a regulatory subunit of the 26 proteasome which is involved in the ATP-dependent degradation of ubiquitinated proteins. The protein is 26S proteasome non-ATPase regulatory subunit 3 homolog B of Arabidopsis thaliana (Mouse-ear cress).